We begin with the raw amino-acid sequence, 261 residues long: Phosphatidylglycerol--prolipoprotein diacylglyceryl transferase (261 aa).

The next 7 helical transmembrane spans lie at 19–39 (VHWY…LALY), 56–76 (LIFY…MLFY), 92–112 (WRGG…TWIF), 126–146 (FVVP…FING), 173–193 (QLYE…WFSA), 199–219 (FAVS…AEFF), and 227–247 (GFVA…MIII). Arg-139 provides a ligand contact to a 1,2-diacyl-sn-glycero-3-phospho-(1'-sn-glycerol).

The protein belongs to the Lgt family.

The protein resides in the cell inner membrane. It carries out the reaction L-cysteinyl-[prolipoprotein] + a 1,2-diacyl-sn-glycero-3-phospho-(1'-sn-glycerol) = an S-1,2-diacyl-sn-glyceryl-L-cysteinyl-[prolipoprotein] + sn-glycerol 1-phosphate + H(+). It participates in protein modification; lipoprotein biosynthesis (diacylglyceryl transfer). Catalyzes the transfer of the diacylglyceryl group from phosphatidylglycerol to the sulfhydryl group of the N-terminal cysteine of a prolipoprotein, the first step in the formation of mature lipoproteins. The polypeptide is Phosphatidylglycerol--prolipoprotein diacylglyceryl transferase (Coxiella burnetii (strain CbuK_Q154) (Coxiella burnetii (strain Q154))).